The primary structure comprises 457 residues: Argininosuccinate lyase (457 aa).

It belongs to the lyase 1 family. Argininosuccinate lyase subfamily.

It localises to the cytoplasm. It carries out the reaction 2-(N(omega)-L-arginino)succinate = fumarate + L-arginine. The protein operates within amino-acid biosynthesis; L-arginine biosynthesis; L-arginine from L-ornithine and carbamoyl phosphate: step 3/3. This is Argininosuccinate lyase from Shigella dysenteriae serotype 1 (strain Sd197).